The following is a 250-amino-acid chain: Orotidine 5'-phosphate decarboxylase (250 aa).

Substrate-binding positions include aspartate 9, lysine 40, 67 to 76 (DLKFHDIPNT), threonine 132, arginine 190, glutamine 204, glycine 224, and arginine 225. Lysine 69 acts as the Proton donor in catalysis.

This sequence belongs to the OMP decarboxylase family. Type 1 subfamily. As to quaternary structure, homodimer.

It catalyses the reaction orotidine 5'-phosphate + H(+) = UMP + CO2. It functions in the pathway pyrimidine metabolism; UMP biosynthesis via de novo pathway; UMP from orotate: step 2/2. Catalyzes the decarboxylation of orotidine 5'-monophosphate (OMP) to uridine 5'-monophosphate (UMP). The polypeptide is Orotidine 5'-phosphate decarboxylase (Nitratidesulfovibrio vulgaris (strain DSM 19637 / Miyazaki F) (Desulfovibrio vulgaris)).